The following is a 548-amino-acid chain: Glucose-6-phosphate isomerase 1 (548 aa).

Glutamate 353 (proton donor) is an active-site residue. Active-site residues include histidine 384 and lysine 512.

This sequence belongs to the GPI family.

The protein resides in the cytoplasm. The catalysed reaction is alpha-D-glucose 6-phosphate = beta-D-fructose 6-phosphate. Its pathway is carbohydrate biosynthesis; gluconeogenesis. It functions in the pathway carbohydrate degradation; glycolysis; D-glyceraldehyde 3-phosphate and glycerone phosphate from D-glucose: step 2/4. In terms of biological role, catalyzes the reversible isomerization of glucose-6-phosphate to fructose-6-phosphate. In Neisseria gonorrhoeae (strain ATCC 700825 / FA 1090), this protein is Glucose-6-phosphate isomerase 1.